Reading from the N-terminus, the 199-residue chain is GTP cyclohydrolase-2 (199 aa).

49 to 53 (RIHSE) serves as a coordination point for GTP. Zn(2+) is bound by residues cysteine 54, cysteine 65, and cysteine 67. GTP-binding positions include glutamine 70, 92–94 (EGR), and threonine 114. Aspartate 126 functions as the Proton acceptor in the catalytic mechanism. Arginine 128 (nucleophile) is an active-site residue. GTP contacts are provided by threonine 149 and lysine 154.

This sequence belongs to the GTP cyclohydrolase II family. Homodimer. Zn(2+) is required as a cofactor.

The enzyme catalyses GTP + 4 H2O = 2,5-diamino-6-hydroxy-4-(5-phosphoribosylamino)-pyrimidine + formate + 2 phosphate + 3 H(+). It participates in cofactor biosynthesis; riboflavin biosynthesis; 5-amino-6-(D-ribitylamino)uracil from GTP: step 1/4. Functionally, catalyzes the conversion of GTP to 2,5-diamino-6-ribosylamino-4(3H)-pyrimidinone 5'-phosphate (DARP), formate and pyrophosphate. The protein is GTP cyclohydrolase-2 of Blochmanniella floridana.